Consider the following 89-residue polypeptide: Small ribosomal subunit protein uS15 (89 aa).

Belongs to the universal ribosomal protein uS15 family. Part of the 30S ribosomal subunit. Forms a bridge to the 50S subunit in the 70S ribosome, contacting the 23S rRNA.

In terms of biological role, one of the primary rRNA binding proteins, it binds directly to 16S rRNA where it helps nucleate assembly of the platform of the 30S subunit by binding and bridging several RNA helices of the 16S rRNA. Functionally, forms an intersubunit bridge (bridge B4) with the 23S rRNA of the 50S subunit in the ribosome. This is Small ribosomal subunit protein uS15 from Maridesulfovibrio salexigens (strain ATCC 14822 / DSM 2638 / NCIMB 8403 / VKM B-1763) (Desulfovibrio salexigens).